The following is a 219-amino-acid chain: tRNA (guanine-N(7)-)-methyltransferase (219 aa).

Glu-43, Asp-68, Glu-101, and Asn-124 together coordinate S-adenosyl-L-methionine. Residues Lys-128 and Asp-160 each contribute to the substrate site.

It belongs to the class I-like SAM-binding methyltransferase superfamily. TrmB family.

It catalyses the reaction guanosine(46) in tRNA + S-adenosyl-L-methionine = N(7)-methylguanosine(46) in tRNA + S-adenosyl-L-homocysteine. It functions in the pathway tRNA modification; N(7)-methylguanine-tRNA biosynthesis. Functionally, catalyzes the formation of N(7)-methylguanine at position 46 (m7G46) in tRNA. The protein is tRNA (guanine-N(7)-)-methyltransferase of Clostridium botulinum (strain Eklund 17B / Type B).